Reading from the N-terminus, the 332-residue chain is Ribosomal RNA small subunit methyltransferase C (332 aa).

The protein belongs to the methyltransferase superfamily. RsmC family. Monomer.

Its subcellular location is the cytoplasm. The enzyme catalyses guanosine(1207) in 16S rRNA + S-adenosyl-L-methionine = N(2)-methylguanosine(1207) in 16S rRNA + S-adenosyl-L-homocysteine + H(+). In terms of biological role, specifically methylates the guanine in position 1207 of 16S rRNA in the 30S particle. This is Ribosomal RNA small subunit methyltransferase C from Pseudomonas syringae pv. syringae (strain B728a).